Consider the following 277-residue polypeptide: MNNSHPTTKSHLFHIVDPSPWPILTSFALLILVAGGVSFMHSYKFNHYILAFGVISVAYCLYSWWRDVIKEGIIDHSHTEPVRHGLRIGMALFILTEIMFFGVFFASFFKSSLSPVGLLDGVWVIKQGVWPPPNIKVFDPFDIPFINTLILLLSGTTVTWAHYALEERNQKDCVTALGLTIILGIFFTCMQAYEYYHAAFKFTDGIYPSNFYLATGFHGAHVIIGTIFLIVCCFRARRGDFAIKNNGHLGFEFAAWYWHFVDVVWLFLFTFVYIFGS.

6 helical membrane-spanning segments follow: residues 20-40, 45-65, 88-108, 173-193, 211-231, and 255-275; these read PWPI…VSFM, FNHY…YSWW, IGMA…FASF, CVTA…MQAY, FYLA…FLIV, and AWYW…VYIF.

Belongs to the cytochrome c oxidase subunit 3 family.

The protein localises to the cell membrane. It catalyses the reaction 4 Fe(II)-[cytochrome c] + O2 + 8 H(+)(in) = 4 Fe(III)-[cytochrome c] + 2 H2O + 4 H(+)(out). The polypeptide is Probable cytochrome c oxidase subunit 3 (ctaE) (Rickettsia bellii (strain RML369-C)).